Consider the following 234-residue polypeptide: Transcription factor bHLH160 (234 aa).

The span at 1–13 (MSSQPNHQTSISS) shows a compositional bias: polar residues. The segment at 1–67 (MSSQPNHQTS…GAAKKQDHNA (67 aa)) is disordered. Positions 27–37 (IVEKESAEKDT) are enriched in basic and acidic residues. The 56-residue stretch at 60–115 (AKKQDHNAKERLRRMRLHASYLTLGTLLPDHSSSSSKKKWSAPSIIDNVITYIPKL) folds into the bHLH domain.

It belongs to the bHLH protein family.

Its subcellular location is the nucleus. In Arabidopsis thaliana (Mouse-ear cress), this protein is Transcription factor bHLH160.